Consider the following 216-residue polypeptide: RNA pyrophosphohydrolase (216 aa).

A Nudix hydrolase domain is found at Gly6–Thr149. Positions Gly38 to Gly59 match the Nudix box motif. The tract at residues Ala159–His180 is disordered.

This sequence belongs to the Nudix hydrolase family. RppH subfamily. A divalent metal cation serves as cofactor.

Accelerates the degradation of transcripts by removing pyrophosphate from the 5'-end of triphosphorylated RNA, leading to a more labile monophosphorylated state that can stimulate subsequent ribonuclease cleavage. The polypeptide is RNA pyrophosphohydrolase (Burkholderia thailandensis (strain ATCC 700388 / DSM 13276 / CCUG 48851 / CIP 106301 / E264)).